The following is a 313-amino-acid chain: MRLKNHSSVSEFLLLGFPIRPEQGGIFFSLFLAMYLITVLGNLLIILLIRLDSHLHTPMYFFLSHLAFTDISFSSVTVPKMLTKVQNQPIPITYEECVSQTYFFIFFADLDSFLITSMAYDRYMAICHPLHYITIMSQSRCAMLVAVSWVIASACALLHSLLLDQLSFCADHTVPHFFCDLGALLKLSCSDTSLNQLVIFTAGLAAIMLPFLCILISYGRIGFTILQVPTTKGICKALSTCGSHLSVVALYYGSIIGLYFLPPSNSKINNNIVASVMYTVVTPMLNPFIYSLRNKDMKGALKKLLSKKTEFSK.

Residues 1-25 are Extracellular-facing; that stretch reads MRLKNHSSVSEFLLLGFPIRPEQGG. Residue Asn5 is glycosylated (N-linked (GlcNAc...) asparagine). Residues 26–46 traverse the membrane as a helical segment; it reads IFFSLFLAMYLITVLGNLLII. Over 47–57 the chain is Cytoplasmic; it reads LLIRLDSHLHT. A helical transmembrane segment spans residues 58–78; sequence PMYFFLSHLAFTDISFSSVTV. At 79 to 97 the chain is on the extracellular side; sequence PKMLTKVQNQPIPITYEEC. A disulfide bridge links Cys97 with Cys189. The helical transmembrane segment at 98–118 threads the bilayer; the sequence is VSQTYFFIFFADLDSFLITSM. The Cytoplasmic portion of the chain corresponds to 119 to 142; the sequence is AYDRYMAICHPLHYITIMSQSRCA. Residues 143–163 form a helical membrane-spanning segment; the sequence is MLVAVSWVIASACALLHSLLL. Over 164–196 the chain is Extracellular; that stretch reads DQLSFCADHTVPHFFCDLGALLKLSCSDTSLNQ. The chain crosses the membrane as a helical span at residues 197-217; sequence LVIFTAGLAAIMLPFLCILIS. The Cytoplasmic segment spans residues 218–240; the sequence is YGRIGFTILQVPTTKGICKALST. The chain crosses the membrane as a helical span at residues 241 to 261; that stretch reads CGSHLSVVALYYGSIIGLYFL. At 262–271 the chain is on the extracellular side; that stretch reads PPSNSKINNN. The helical transmembrane segment at 272-292 threads the bilayer; the sequence is IVASVMYTVVTPMLNPFIYSL. Residues 293–313 are Cytoplasmic-facing; sequence RNKDMKGALKKLLSKKTEFSK.

It belongs to the G-protein coupled receptor 1 family.

Its subcellular location is the cell membrane. Its function is as follows. Odorant receptor. This chain is Olfactory receptor 1J1, found in Mus musculus (Mouse).